Here is a 296-residue protein sequence, read N- to C-terminus: MIYLHAIDPIAFSLGPVKVHWYGLMYLAAFFSAWSLGRSRILRGRLPGVDMDGFSDLLFYGMLGVVLGGRIGYMLFYAFETFVANPLILFKVWEGGMSFHGGLLGVLVACWLWARKHRLHFFDVMDFVAPLVPLGLGFGRLGNFVGGELWGKFTQAGWGVIFPHAPELADQLPAQIQAQYAAGALNQLARHPSQLYEAALEGVVMFVVLWTFSMKPRARYALSGLFALLYGVFRFIVEFVRVPDAPIGYLAFNWLTMGQILSLPLIAVGLALLAMSRRAPVLQPVLPTPAGVEAAK.

The next 4 helical transmembrane spans lie at 10 to 30, 57 to 77, 92 to 112, and 119 to 139; these read IAFSLGPVKVHWYGLMYLAAF, LLFYGMLGVVLGGRIGYMLFY, VWEGGMSFHGGLLGVLVACWL, and LHFFDVMDFVAPLVPLGLGFG. A 1,2-diacyl-sn-glycero-3-phospho-(1'-sn-glycerol) is bound at residue Arg140. The next 3 membrane-spanning stretches (helical) occupy residues 194–214, 220–240, and 254–274; these read QLYEAALEGVVMFVVLWTFSM, YALSGLFALLYGVFRFIVEFV, and WLTMGQILSLPLIAVGLALLA.

It belongs to the Lgt family.

It localises to the cell inner membrane. The catalysed reaction is L-cysteinyl-[prolipoprotein] + a 1,2-diacyl-sn-glycero-3-phospho-(1'-sn-glycerol) = an S-1,2-diacyl-sn-glyceryl-L-cysteinyl-[prolipoprotein] + sn-glycerol 1-phosphate + H(+). It participates in protein modification; lipoprotein biosynthesis (diacylglyceryl transfer). Catalyzes the transfer of the diacylglyceryl group from phosphatidylglycerol to the sulfhydryl group of the N-terminal cysteine of a prolipoprotein, the first step in the formation of mature lipoproteins. The protein is Phosphatidylglycerol--prolipoprotein diacylglyceryl transferase of Xanthomonas oryzae pv. oryzae (strain MAFF 311018).